A 161-amino-acid polypeptide reads, in one-letter code: Xanthine-guanine phosphoribosyltransferase (161 aa).

Residues 41 to 42 (RG) and 95 to 103 (DDLVDTGNT) each bind 5-phospho-alpha-D-ribose 1-diphosphate. A Mg(2+)-binding site is contributed by aspartate 96. Residues aspartate 99 and isoleucine 142 each coordinate guanine. The xanthine site is built by aspartate 99 and isoleucine 142. GMP contacts are provided by residues 99–103 (DTGNT) and 141–142 (WI).

Belongs to the purine/pyrimidine phosphoribosyltransferase family. XGPT subfamily. As to quaternary structure, homotetramer. Mg(2+) is required as a cofactor.

The protein localises to the cell inner membrane. The catalysed reaction is GMP + diphosphate = guanine + 5-phospho-alpha-D-ribose 1-diphosphate. It catalyses the reaction XMP + diphosphate = xanthine + 5-phospho-alpha-D-ribose 1-diphosphate. The enzyme catalyses IMP + diphosphate = hypoxanthine + 5-phospho-alpha-D-ribose 1-diphosphate. It participates in purine metabolism; GMP biosynthesis via salvage pathway; GMP from guanine: step 1/1. It functions in the pathway purine metabolism; XMP biosynthesis via salvage pathway; XMP from xanthine: step 1/1. In terms of biological role, purine salvage pathway enzyme that catalyzes the transfer of the ribosyl-5-phosphate group from 5-phospho-alpha-D-ribose 1-diphosphate (PRPP) to the N9 position of the 6-oxopurines guanine and xanthine to form the corresponding ribonucleotides GMP (guanosine 5'-monophosphate) and XMP (xanthosine 5'-monophosphate), with the release of PPi. To a lesser extent, also acts on hypoxanthine. In Idiomarina loihiensis (strain ATCC BAA-735 / DSM 15497 / L2-TR), this protein is Xanthine-guanine phosphoribosyltransferase.